The following is a 162-amino-acid chain: Crossover junction endodeoxyribonuclease RuvC (162 aa).

Active-site residues include D7, E67, and D140. Residues D7, E67, and D140 each coordinate Mg(2+).

The protein belongs to the RuvC family. Homodimer which binds Holliday junction (HJ) DNA. The HJ becomes 2-fold symmetrical on binding to RuvC with unstacked arms; it has a different conformation from HJ DNA in complex with RuvA. In the full resolvosome a probable DNA-RuvA(4)-RuvB(12)-RuvC(2) complex forms which resolves the HJ. The cofactor is Mg(2+).

It is found in the cytoplasm. It catalyses the reaction Endonucleolytic cleavage at a junction such as a reciprocal single-stranded crossover between two homologous DNA duplexes (Holliday junction).. Functionally, the RuvA-RuvB-RuvC complex processes Holliday junction (HJ) DNA during genetic recombination and DNA repair. Endonuclease that resolves HJ intermediates. Cleaves cruciform DNA by making single-stranded nicks across the HJ at symmetrical positions within the homologous arms, yielding a 5'-phosphate and a 3'-hydroxyl group; requires a central core of homology in the junction. The consensus cleavage sequence is 5'-(A/T)TT(C/G)-3'. Cleavage occurs on the 3'-side of the TT dinucleotide at the point of strand exchange. HJ branch migration catalyzed by RuvA-RuvB allows RuvC to scan DNA until it finds its consensus sequence, where it cleaves and resolves the cruciform DNA. This is Crossover junction endodeoxyribonuclease RuvC from Wolinella succinogenes (strain ATCC 29543 / DSM 1740 / CCUG 13145 / JCM 31913 / LMG 7466 / NCTC 11488 / FDC 602W) (Vibrio succinogenes).